The primary structure comprises 245 residues: 1-(5-phosphoribosyl)-5-[(5-phosphoribosylamino)methylideneamino] imidazole-4-carboxamide isomerase (245 aa).

D8 acts as the Proton acceptor in catalysis. D129 acts as the Proton donor in catalysis.

The protein belongs to the HisA/HisF family.

The protein localises to the cytoplasm. The catalysed reaction is 1-(5-phospho-beta-D-ribosyl)-5-[(5-phospho-beta-D-ribosylamino)methylideneamino]imidazole-4-carboxamide = 5-[(5-phospho-1-deoxy-D-ribulos-1-ylimino)methylamino]-1-(5-phospho-beta-D-ribosyl)imidazole-4-carboxamide. Its pathway is amino-acid biosynthesis; L-histidine biosynthesis; L-histidine from 5-phospho-alpha-D-ribose 1-diphosphate: step 4/9. In Rhodopseudomonas palustris (strain BisA53), this protein is 1-(5-phosphoribosyl)-5-[(5-phosphoribosylamino)methylideneamino] imidazole-4-carboxamide isomerase.